A 45-amino-acid chain; its full sequence is Cytochrome b559 subunit beta (45 aa).

A helical transmembrane segment spans residues tryptophan 20 to alanine 36. Position 24 (histidine 24) interacts with heme.

This sequence belongs to the PsbE/PsbF family. As to quaternary structure, heterodimer of an alpha subunit and a beta subunit. PSII is composed of 1 copy each of membrane proteins PsbA, PsbB, PsbC, PsbD, PsbE, PsbF, PsbH, PsbI, PsbJ, PsbK, PsbL, PsbM, PsbT, PsbX, PsbY, PsbZ, Psb30/Ycf12, peripheral proteins PsbO, CyanoQ (PsbQ), PsbU, PsbV and a large number of cofactors. It forms dimeric complexes. It depends on heme b as a cofactor.

The protein resides in the cellular thylakoid membrane. Its function is as follows. This b-type cytochrome is tightly associated with the reaction center of photosystem II (PSII). PSII is a light-driven water:plastoquinone oxidoreductase that uses light energy to abstract electrons from H(2)O, generating O(2) and a proton gradient subsequently used for ATP formation. It consists of a core antenna complex that captures photons, and an electron transfer chain that converts photonic excitation into a charge separation. The polypeptide is Cytochrome b559 subunit beta (Parasynechococcus marenigrum (strain WH8102)).